Reading from the N-terminus, the 830-residue chain is Probable glucan 1,3-beta-glucosidase D (830 aa).

Composition is skewed to basic and acidic residues over residues 1–11 (MPGHSRSRDRL) and 74–84 (VHEHDHDHEYD). 3 disordered regions span residues 1 to 91 (MPGH…EEPW), 127 to 163 (MSGA…QRRK), and 260 to 297 (GGPG…STSA). Topologically, residues 1 to 307 (MPGHSRSRDR…RPSFWKRYHK (307 aa)) are cytoplasmic. The segment covering 147–163 (GKGKKRLDRETRRQRRK) has biased composition (basic residues). A helical; Signal-anchor for type II membrane protein transmembrane segment spans residues 308–328 (TFIFFAILIVLAAIAIPVGII). Topologically, residues 329-830 (EARRLHGTSG…PSFGNLPEYY (502 aa)) are extracellular. N-linked (GlcNAc...) asparagine glycans are attached at residues Asn-341, Asn-376, Asn-381, Asn-393, Asn-397, Asn-546, and Asn-558. Residue Glu-597 is the Proton donor of the active site. Asn-610, Asn-669, and Asn-689 each carry an N-linked (GlcNAc...) asparagine glycan. Glu-702 functions as the Nucleophile in the catalytic mechanism.

This sequence belongs to the glycosyl hydrolase 5 (cellulase A) family.

It is found in the cell membrane. It carries out the reaction Successive hydrolysis of beta-D-glucose units from the non-reducing ends of (1-&gt;3)-beta-D-glucans, releasing alpha-glucose.. Functionally, glucosidase involved in the degradation of cellulosic biomass. Active on lichenan. In Aspergillus niger (strain ATCC MYA-4892 / CBS 513.88 / FGSC A1513), this protein is Probable glucan 1,3-beta-glucosidase D (exgD).